Here is a 290-residue protein sequence, read N- to C-terminus: Agmatinase (290 aa).

Mn(2+) contacts are provided by His-112, Asp-135, His-137, Asp-139, Asp-216, and Asp-218.

This sequence belongs to the arginase family. Agmatinase subfamily. Requires Mn(2+) as cofactor.

It catalyses the reaction agmatine + H2O = urea + putrescine. It participates in amine and polyamine biosynthesis; putrescine biosynthesis via agmatine pathway; putrescine from agmatine: step 1/1. In terms of biological role, catalyzes the formation of putrescine from agmatine. The protein is Agmatinase (speB) of Bacillus cereus (strain ATCC 14579 / DSM 31 / CCUG 7414 / JCM 2152 / NBRC 15305 / NCIMB 9373 / NCTC 2599 / NRRL B-3711).